The primary structure comprises 161 residues: Regulator of ribonuclease activity A (161 aa).

This sequence belongs to the RraA family. As to quaternary structure, homotrimer. Binds to both RNA-binding sites in the C-terminal region of Rne and to RhlB.

It is found in the cytoplasm. In terms of biological role, globally modulates RNA abundance by binding to RNase E (Rne) and regulating its endonucleolytic activity. Can modulate Rne action in a substrate-dependent manner by altering the composition of the degradosome. Modulates RNA-binding and helicase activities of the degradosome. The polypeptide is Regulator of ribonuclease activity A (Erwinia tasmaniensis (strain DSM 17950 / CFBP 7177 / CIP 109463 / NCPPB 4357 / Et1/99)).